Reading from the N-terminus, the 235-residue chain is Purine nucleoside phosphorylase DeoD-type (235 aa).

His-4 contributes to the a purine D-ribonucleoside binding site. Residues Gly-20, Arg-24, Arg-43, and Arg-87–Thr-90 each bind phosphate. A purine D-ribonucleoside is bound by residues Glu-179–Glu-181 and Ser-203–Asp-204. The active-site Proton donor is Asp-204.

The protein belongs to the PNP/UDP phosphorylase family. Homohexamer; trimer of homodimers.

The catalysed reaction is a purine D-ribonucleoside + phosphate = a purine nucleobase + alpha-D-ribose 1-phosphate. The enzyme catalyses a purine 2'-deoxy-D-ribonucleoside + phosphate = a purine nucleobase + 2-deoxy-alpha-D-ribose 1-phosphate. Its function is as follows. Catalyzes the reversible phosphorolytic breakdown of the N-glycosidic bond in the beta-(deoxy)ribonucleoside molecules, with the formation of the corresponding free purine bases and pentose-1-phosphate. The chain is Purine nucleoside phosphorylase DeoD-type from Brevibacillus brevis (strain 47 / JCM 6285 / NBRC 100599).